A 362-amino-acid chain; its full sequence is Prostaglandin F2-alpha receptor (362 aa).

Residues 1–31 (MSTNNSVQPVSPASELLSNTTCQLEEDLSIS) are Extracellular-facing. Residues Asn4 and Asn19 are each glycosylated (N-linked (GlcNAc...) asparagine). Residues 32-54 (FSIIFMTVGILSNSLAIAILMKA) form a helical membrane-spanning segment. Topologically, residues 55–69 (YQRFRQKYKSSFLLL) are cytoplasmic. A helical transmembrane segment spans residues 70 to 90 (ASALVITDFFGHLINGTIAVF). At 91–109 (VYASDKDWIYFDKSNILCS) the chain is on the extracellular side. Cys108 and Cys186 are oxidised to a cystine. The chain crosses the membrane as a helical span at residues 110 to 131 (IFGICMVFSGLCPLFLGSLMAI). At 132–152 (ERCIGVTKPIFHSTKITTKHV) the chain is on the cytoplasmic side. Residues 153 to 175 (KMMLSGVCFFAVFVALLPILGHR) form a helical membrane-spanning segment. Residues 176–198 (DYKIQASRTWCFYKTDQIKDWED) lie on the Extracellular side of the membrane. A helical transmembrane segment spans residues 199–224 (RFYLLLFAFLGLLALGISFVCNAITG). At 225-250 (ISLLKVKFRSQQHRQGRSHHFEMVIQ) the chain is on the cytoplasmic side. The helical transmembrane segment at 251-267 (LLGIMCVSCICWSPFLV) threads the bilayer. Topologically, residues 268–285 (TMASIGMNIQDFKDSCER) are extracellular. The helical transmembrane segment at 286 to 307 (TLFTLRMATWNQILDPWVYILL) threads the bilayer. The Cytoplasmic portion of the chain corresponds to 308–362 (RKAVLRNLYVCTRRCCGVHVISLHVWELSSIKNSLKVAAISDLPVTEKVTQQTST).

It belongs to the G-protein coupled receptor 1 family.

Its subcellular location is the cell membrane. Its function is as follows. Receptor for prostaglandin F2-alpha (PGF2-alpha). The activity of this receptor is mediated by G proteins which activate a phosphatidylinositol-calcium second messenger system. Initiates luteolysis in the corpus luteum. This Ovis aries (Sheep) protein is Prostaglandin F2-alpha receptor (PTGFR).